We begin with the raw amino-acid sequence, 130 residues long: ATP synthase epsilon chain (130 aa).

Belongs to the ATPase epsilon chain family. F-type ATPases have 2 components, CF(1) - the catalytic core - and CF(0) - the membrane proton channel. CF(1) has five subunits: alpha(3), beta(3), gamma(1), delta(1), epsilon(1). CF(0) has three main subunits: a, b and c.

Its subcellular location is the cell inner membrane. Its function is as follows. Produces ATP from ADP in the presence of a proton gradient across the membrane. This Campylobacter lari (strain RM2100 / D67 / ATCC BAA-1060) protein is ATP synthase epsilon chain.